The primary structure comprises 553 residues: Sulfatase (553 aa).

An N-terminal signal peptide occupies residues 1–25 (MTSEMKKFSKIVLFGLLISPLLASS). Asp-43, Asp-44, and Cys-88 together coordinate Ca(2+). The Nucleophile role is filled by Cys-88. Cys-88 is subject to 3-oxoalanine (Cys). His-159 is a catalytic residue. Ca(2+) contacts are provided by Asp-350 and Asn-351.

This sequence belongs to the sulfatase family. Ca(2+) is required as a cofactor. The conversion to 3-oxoalanine (also known as C-formylglycine, FGly), of a serine or cysteine residue in prokaryotes and of a cysteine residue in eukaryotes, is critical for catalytic activity. This post-translational modification is severely defective in multiple sulfatase deficiency (MSD).

The protein localises to the secreted. Sulfatase that may be involved in ulvan degradation. Ulvan is the main polysaccharide component of the Ulvales (green seaweed) cell wall. It is composed of disaccharide building blocks comprising 3-sulfated rhamnose (Rha3S) linked to D-glucuronic acid (GlcA), L-iduronic acid (IduA), or D-xylose (Xyl). The sequence is that of Sulfatase from Formosa agariphila (strain DSM 15362 / KCTC 12365 / LMG 23005 / KMM 3901 / M-2Alg 35-1).